Reading from the N-terminus, the 164-residue chain is Transcription elongation factor GreA (164 aa).

Residues 11 to 76 (EESYDRLKAE…LQELLNNAKV (66 aa)) adopt a coiled-coil conformation.

The protein belongs to the GreA/GreB family.

In terms of biological role, necessary for efficient RNA polymerase transcription elongation past template-encoded arresting sites. The arresting sites in DNA have the property of trapping a certain fraction of elongating RNA polymerases that pass through, resulting in locked ternary complexes. Cleavage of the nascent transcript by cleavage factors such as GreA or GreB allows the resumption of elongation from the new 3'terminus. GreA releases sequences of 2 to 3 nucleotides. In Mycolicibacterium vanbaalenii (strain DSM 7251 / JCM 13017 / BCRC 16820 / KCTC 9966 / NRRL B-24157 / PYR-1) (Mycobacterium vanbaalenii), this protein is Transcription elongation factor GreA.